The chain runs to 327 residues: Putative HTH-type transcriptional regulatory protein MmarC6_0210 (327 aa).

The HTH cro/C1-type domain maps to 128–183; that stretch reads LRETREKLKISVGELAEISRVSRKTIYKYEQNEANPSAEVAIKIEEYLDVPLIKGI. Positions 139 to 158 form a DNA-binding region, H-T-H motif; that stretch reads VGELAEISRVSRKTIYKYEQ.

The protein is Putative HTH-type transcriptional regulatory protein MmarC6_0210 of Methanococcus maripaludis (strain C6 / ATCC BAA-1332).